A 205-amino-acid polypeptide reads, in one-letter code: Putative 3-methyladenine DNA glycosylase (205 aa).

It belongs to the DNA glycosylase MPG family.

The polypeptide is Putative 3-methyladenine DNA glycosylase (Bacillus cereus (strain ATCC 14579 / DSM 31 / CCUG 7414 / JCM 2152 / NBRC 15305 / NCIMB 9373 / NCTC 2599 / NRRL B-3711)).